The following is a 268-amino-acid chain: Glutamate racemase (268 aa).

Substrate is bound by residues 10–11 (DS) and 42–43 (YG). Cys73 acts as the Proton donor/acceptor in catalysis. A substrate-binding site is contributed by 74 to 75 (NT). Cys184 functions as the Proton donor/acceptor in the catalytic mechanism. 185-186 (TH) provides a ligand contact to substrate.

It belongs to the aspartate/glutamate racemases family.

The enzyme catalyses L-glutamate = D-glutamate. Its pathway is cell wall biogenesis; peptidoglycan biosynthesis. Provides the (R)-glutamate required for cell wall biosynthesis. The sequence is that of Glutamate racemase from Limosilactobacillus fermentum (strain NBRC 3956 / LMG 18251) (Lactobacillus fermentum).